The primary structure comprises 360 residues: Peptide chain release factor 1 (360 aa).

Position 235 is an N5-methylglutamine (Gln235). Residues 283-308 are compositionally biased toward basic and acidic residues; it reads MQKRQQAEASERRNLLGSGDRSDRNR. A disordered region spans residues 283 to 313; that stretch reads MQKRQQAEASERRNLLGSGDRSDRNRTYNFP.

The protein belongs to the prokaryotic/mitochondrial release factor family. Methylated by PrmC. Methylation increases the termination efficiency of RF1.

The protein resides in the cytoplasm. In terms of biological role, peptide chain release factor 1 directs the termination of translation in response to the peptide chain termination codons UAG and UAA. The polypeptide is Peptide chain release factor 1 (Yersinia enterocolitica serotype O:8 / biotype 1B (strain NCTC 13174 / 8081)).